The sequence spans 723 residues: Zinc finger protein 750 (723 aa).

The CCHC-type zinc-finger motif lies at 25-51; it reads YKCFQCPFTCNEKSHLFNHMKYGLCKN. Zn(2+) contacts are provided by Cys-27, Cys-30, His-43, and Cys-49. Disordered regions lie at residues 64 to 91, 132 to 153, 359 to 427, 466 to 630, and 650 to 723; these read KCPK…SKSV, LHRA…QPAL, ASSP…SQTC, PAQA…SEEQ, and RVGD…ARVS. Residues 67-91 are compositionally biased toward polar residues; it reads KSNSLDPKQTNQPDATAKPASSKSV. Residues 360-369 show a composition bias toward polar residues; it reads SSPSRLNPSD. Residues 370–397 are compositionally biased toward basic and acidic residues; it reads PNRKHVEFESPIPEAKDSSKAGQRDTEG. Residues 470 to 482 show a composition bias toward polar residues; that stretch reads AETTAESPVSLNV. Over residues 500-509 the composition is skewed to low complexity; that stretch reads AAPSSPDDSS. A compositionally biased stretch (polar residues) spans 530–545; sequence PTYQGSPQAETASFSE. Composition is skewed to low complexity over residues 563 to 582 and 606 to 616; these read APRP…AAVP and GDGAPPTGPGE. The segment covering 666 to 678 has biased composition (polar residues); sequence DTPTLSSMESQEA.

As to expression, expressed in the skin, prostate, lung, placenta and thymus, and at low level in T-cells. Not expressed in peripheral blood leukocytes, pancreas and brain. Clearly expressed in primary keratinocytes but not in fibroblasts.

Its subcellular location is the nucleus. In terms of biological role, transcription factor involved in epidermis differentiation. Required for terminal epidermal differentiation: acts downstream of p63/TP63 and activates expression of late epidermal differentiation genes. Specifically binds to the promoter of KLF4 and promotes its expression. The protein is Zinc finger protein 750 (ZNF750) of Homo sapiens (Human).